A 521-amino-acid polypeptide reads, in one-letter code: Envelope glycoprotein (521 aa).

Positions 1 to 20 (MVDSTIRLVATIFLISLTQQ) are cleaved as a signal peptide. 4 N-linked (GlcNAc...) asparagine; by host glycosylation sites follow: Asn-44, Asn-158, Asn-189, and Asn-396. The chain crosses the membrane as a helical span at residues 501-517 (ISWVVVIGVVLVGVCLM).

Homooligomer; disulfide-linked (possibly homodimer).

Its subcellular location is the virion membrane. Its function is as follows. Attaches the virus to host cellular receptor and later induces fusion of virion with host membrane. This chain is Envelope glycoprotein (P4), found in Dhori virus (strain Indian/1313/61) (Dho).